Here is a 215-residue protein sequence, read N- to C-terminus: Cytochrome b6 (215 aa).

The helical transmembrane segment at 32–52 (IFYCIGGITFTCFLVQVATGF) threads the bilayer. Heme c is bound at residue cysteine 35. Heme b-binding residues include glycine 37, arginine 83, histidine 86, histidine 100, arginine 103, and arginine 114. Residues 90-110 (ASMMVLMMVLHVFRVYLTGGF) form a helical membrane-spanning segment. The next 2 membrane-spanning stretches (helical) occupy residues 116-136 (LTWV…VTGY) and 186-206 (LHTF…FLMI). The heme b site is built by histidine 187 and histidine 202. Heme c contacts are provided by arginine 207 and isoleucine 211. Serine 212 serves as a coordination point for heme b.

Belongs to the cytochrome b family. PetB subfamily. In terms of assembly, the 4 large subunits of the cytochrome b6-f complex are cytochrome b6, subunit IV (17 kDa polypeptide, PetD), cytochrome f and the Rieske protein, while the 4 small subunits are PetG, PetL, PetM and PetN. The complex functions as a dimer. Heme b is required as a cofactor. The cofactor is heme c. In terms of processing, the N-terminus is blocked.

The protein resides in the plastid. It localises to the chloroplast thylakoid membrane. Component of the cytochrome b6-f complex, which mediates electron transfer between photosystem II (PSII) and photosystem I (PSI), cyclic electron flow around PSI, and state transitions. This chain is Cytochrome b6, found in Chlamydomonas reinhardtii (Chlamydomonas smithii).